Here is a 39-residue protein sequence, read N- to C-terminus: Mating pheromone Er-11 (39 aa).

Cystine bridges form between C3–C19, C10–C34, and C15–C26.

As to quaternary structure, homodimer.

It is found in the secreted. Mating ciliate pheromones (or gamones) are diffusible extracellular communication signals that distinguish different intraspecific classes of cells commonly referred to as 'mating types'. They prepare the latter for conjugation by changing their cell surface properties. The protein is Mating pheromone Er-11 (MAT11) of Euplotes raikovi.